We begin with the raw amino-acid sequence, 707 residues long: Polyribonucleotide nucleotidyltransferase (707 aa).

2 residues coordinate Mg(2+): aspartate 485 and aspartate 491. The KH domain occupies 552–611 (PRIYTMKIDPKKIKDVIGKGGATIRTLTEETGTSIDIDDDGTVKIAAIDGNAVKEVMARI). The 69-residue stretch at 621–689 (GAVYTGKVTR…RQGRIRLTMK (69 aa)) folds into the S1 motif domain.

It belongs to the polyribonucleotide nucleotidyltransferase family. In terms of assembly, component of the RNA degradosome, which is a multiprotein complex involved in RNA processing and mRNA degradation. Requires Mg(2+) as cofactor.

It is found in the cytoplasm. The catalysed reaction is RNA(n+1) + phosphate = RNA(n) + a ribonucleoside 5'-diphosphate. In terms of biological role, involved in mRNA degradation. Catalyzes the phosphorolysis of single-stranded polyribonucleotides processively in the 3'- to 5'-direction. This chain is Polyribonucleotide nucleotidyltransferase, found in Actinobacillus succinogenes (strain ATCC 55618 / DSM 22257 / CCUG 43843 / 130Z).